We begin with the raw amino-acid sequence, 212 residues long: Thymidylate kinase (212 aa).

10 to 17 contributes to the ATP binding site; sequence GLEGAGKT.

It belongs to the thymidylate kinase family.

It catalyses the reaction dTMP + ATP = dTDP + ADP. Its function is as follows. Phosphorylation of dTMP to form dTDP in both de novo and salvage pathways of dTTP synthesis. This chain is Thymidylate kinase, found in Yersinia pseudotuberculosis serotype O:1b (strain IP 31758).